Reading from the N-terminus, the 245-residue chain is 6-carboxyhexanoate--CoA ligase (245 aa).

It belongs to the BioW family. Homodimer. Mg(2+) is required as a cofactor.

It catalyses the reaction heptanedioate + ATP + CoA = 6-carboxyhexanoyl-CoA + AMP + diphosphate. It participates in metabolic intermediate metabolism; pimeloyl-CoA biosynthesis; pimeloyl-CoA from pimelate: step 1/1. Functionally, catalyzes the transformation of pimelate into pimeloyl-CoA with concomitant hydrolysis of ATP to AMP. This is 6-carboxyhexanoate--CoA ligase from Thermodesulfovibrio yellowstonii (strain ATCC 51303 / DSM 11347 / YP87).